Here is a 644-residue protein sequence, read N- to C-terminus: Polyglycine hydrolase (644 aa).

An N-terminal signal peptide occupies residues 1–23 (MYTSRSLFSTLASCLSLATLVAS). N-linked (GlcNAc...) asparagine glycosylation is found at Asn-100, Asn-144, Asn-159, Asn-244, and Asn-340. Cys-149 and Cys-183 are oxidised to a cystine. Ser-369 is an active-site residue. N-linked (GlcNAc...) asparagine glycans are attached at residues Asn-389, Asn-410, Asn-443, and Asn-486.

This sequence belongs to the peptidase S12 family.

The protein resides in the secreted. It carries out the reaction a glycyl-glycyl-[protein] + H2O = N-terminal glycyl-[protein] + [protein]-C-terminal glycine. Not inhibited by phenylmethylsulfonyl fluoride (PMSF; serine peptidase class S1 inhibitor), clavulanic acid (beta-lactamase inhibitor) or ampicillin (penicillin-binding protein (PBP) inhibitor). Functionally, serine-type endopeptidase that cleaves Gly-Gly bonds in the polyglycine linker of host plant class IV chitinases to disrupt their chitin-binding, and thereby plays a role in lowering the defense responses of the host to the fungus. Degrades Z.mays Endochitinase A (CHIA). Has low proteolytic activity on Z.mays Endochitinase B (CHIB). The sequence is that of Polyglycine hydrolase from Cochliobolus carbonum (strain 26-R-13) (Maize leaf spot fungus).